The chain runs to 1023 residues: Sodium/potassium-transporting ATPase subunit alpha-1 (1023 aa).

Positions 1–5 are excised as a propeptide; sequence MGKGV. The span at 1–11 shows a compositional bias: basic and acidic residues; sequence MGKGVGRDKYE. The disordered stretch occupies residues 1-39; sequence MGKGVGRDKYEPAAVSEHGDKKGKKAKKERDMDELKKEV. At 6-96 the chain is on the cytoplasmic side; sequence GRDKYEPAAV…PEWVKFCRQL (91 aa). K9 is subject to N6-acetyllysine. At Y10 the chain carries Phosphotyrosine. S16 carries the phosphoserine modification. Position 21 is an N6-acetyllysine (K21). Residues 28-39 show a composition bias toward basic and acidic residues; sequence KERDMDELKKEV. S40 and S47 each carry phosphoserine. The tract at residues 82–84 is phosphoinositide-3 kinase binding; that stretch reads PPP. The chain crosses the membrane as a helical span at residues 97 to 117; that stretch reads FGGFSMLLWIGAILCFLAYGI. At 118-129 the chain is on the extracellular side; the sequence is RSATEEEPPNDD. The helical transmembrane segment at 130–150 threads the bilayer; sequence LYLGVVLSAVVIITGCFSYYQ. Residues 151-291 are Cytoplasmic-facing; the sequence is EAKSSKIMES…TPIAEEIEHF (141 aa). A disordered region spans residues 216-235; sequence SSLTGESEPQTRSPDFTNEN. Position 228 is a phosphoserine (S228). Y260 is modified (phosphotyrosine). The chain crosses the membrane as a helical span at residues 292 to 312; it reads IHLITGVAVFLGVSFFILSLI. Over 313–319 the chain is Extracellular; it reads LEYTWLE. Residues 320 to 340 traverse the membrane as a helical segment; that stretch reads AVIFLIGIIVANVPEGLLATV. At 341–775 the chain is on the cytoplasmic side; it reads TVCLTLTAKR…RLIFDNLKKS (435 aa). The active-site 4-aspartylphosphate intermediate is D376. Phosphoserine is present on residues S452 and S484. Residue K487 participates in ATP binding. Y542 carries the phosphotyrosine modification. The interval 596–717 is mediates interaction with SCN7A; sequence RAAVPDAVGK…QGAIVAVTGD (122 aa). An N6-succinyllysine modification is found at K661. S668 and S675 each carry phosphoserine. 2 residues coordinate Mg(2+): D717 and D721. The chain crosses the membrane as a helical span at residues 776-798; sequence IAYTLTSNIPEITPFLIFIIANI. Over 799–801 the chain is Extracellular; it reads PLP. The chain crosses the membrane as a helical span at residues 802–824; that stretch reads LGTVTILCIDLGTDMVPAISLAY. Residues 825–849 are Cytoplasmic-facing; that stretch reads EQAESDIMKRQPRNPKTDKLVNERL. A helical transmembrane segment spans residues 850–872; it reads ISMAYGQIGMIQALGGFFTYFVI. Over 873–915 the chain is Extracellular; that stretch reads LAENGFLPFHLLGIRETWDDRWVNDVEDSYGQQWTYEQRKIVE. A helical membrane pass occupies residues 916-936; it reads FTCHTAFFVSIVVVQWADLVI. Topologically, residues 937–952 are cytoplasmic; it reads CKTRRNSVFQQGMKNK. The residue at position 943 (S943) is a Phosphoserine; by PKA. The chain crosses the membrane as a helical span at residues 953 to 973; that stretch reads ILIFGLFEETALAAFLSYCPG. Over 974–979 the chain is Extracellular; the sequence is MGAALR. The chain crosses the membrane as a helical span at residues 980–1000; it reads MYPLKPTWWFCAFPYSLLIFV. Topologically, residues 1001–1023 are cytoplasmic; the sequence is YDEVRKLIIRRRPGGWVEKETYY.

This sequence belongs to the cation transport ATPase (P-type) (TC 3.A.3) family. Type IIC subfamily. In terms of assembly, the sodium/potassium-transporting ATPase is composed of a catalytic alpha subunit, an auxiliary non-catalytic beta subunit and an additional regulatory subunit. Interacts with regulatory subunit FXYD1. Interacts with regulatory subunit FXYD3. Interacts with SIK1. Interacts with SLC35G1 and STIM1. Interacts with CLN3; this interaction regulates the sodium/potassium-transporting ATPase complex localization at the plasma membrane. Interacts with SCN7A; activates ATP1A1 P-type sodium:potassium-exchanging transporter activity which indirectly signals to nearby neurons to regulate sodium homeostasis. Post-translationally, phosphorylation on Tyr-10 modulates pumping activity. Phosphorylation of Ser-943 by PKA modulates the response of ATP1A1 to PKC. Dephosphorylation by protein phosphatase 2A (PP2A) following increases in intracellular sodium, leading to increase catalytic activity.

The protein resides in the cell membrane. It localises to the basolateral cell membrane. The protein localises to the sarcolemma. It is found in the cell projection. Its subcellular location is the axon. The protein resides in the melanosome. It carries out the reaction K(+)(out) + Na(+)(in) + ATP + H2O = K(+)(in) + Na(+)(out) + ADP + phosphate + H(+). Its function is as follows. This is the catalytic component of the active enzyme, which catalyzes the hydrolysis of ATP coupled with the exchange of sodium and potassium ions across the plasma membrane. This action creates the electrochemical gradient of sodium and potassium ions, providing the energy for active transport of various nutrients. Could also be part of an osmosensory signaling pathway that senses body-fluid sodium levels and controls salt intake behavior as well as voluntary water intake to regulate sodium homeostasis. The sequence is that of Sodium/potassium-transporting ATPase subunit alpha-1 (Atp1a1) from Mus musculus (Mouse).